The following is a 131-amino-acid chain: Holo-[acyl-carrier-protein] synthase (131 aa).

The Mg(2+) site is built by aspartate 9 and glutamate 58.

Belongs to the P-Pant transferase superfamily. AcpS family. It depends on Mg(2+) as a cofactor.

It localises to the cytoplasm. It carries out the reaction apo-[ACP] + CoA = holo-[ACP] + adenosine 3',5'-bisphosphate + H(+). Transfers the 4'-phosphopantetheine moiety from coenzyme A to a Ser of acyl-carrier-protein. The chain is Holo-[acyl-carrier-protein] synthase from Salmonella arizonae (strain ATCC BAA-731 / CDC346-86 / RSK2980).